We begin with the raw amino-acid sequence, 434 residues long: Cytochrome P450 144 (434 aa).

2 residues coordinate substrate: Asp-124 and His-128. Heme is bound by residues Arg-132, Arg-326, His-383, and Cys-385.

It belongs to the cytochrome P450 family. In terms of assembly, monomer. It depends on heme as a cofactor.

In Mycobacterium tuberculosis (strain CDC 1551 / Oshkosh), this protein is Cytochrome P450 144 (cyp144).